The primary structure comprises 94 residues: Co-chaperonin GroES (94 aa).

Residues 17–53 (DSNPNSPIQLPDSAKKKPTKGKVVSVGPGASNSDGKV) form a disordered region.

It belongs to the GroES chaperonin family. As to quaternary structure, heptamer of 7 subunits arranged in a ring. Interacts with the chaperonin GroEL.

The protein localises to the cytoplasm. Its function is as follows. Together with the chaperonin GroEL, plays an essential role in assisting protein folding. The GroEL-GroES system forms a nano-cage that allows encapsulation of the non-native substrate proteins and provides a physical environment optimized to promote and accelerate protein folding. GroES binds to the apical surface of the GroEL ring, thereby capping the opening of the GroEL channel. This is Co-chaperonin GroES from Anaplasma phagocytophilum (strain HZ).